The primary structure comprises 249 residues: uncharacterized protein (249 aa).

This sequence belongs to the AIM2 family.

Its subcellular location is the cytoplasm. It localises to the nucleus. This is an uncharacterized protein from Schizosaccharomyces pombe (strain 972 / ATCC 24843) (Fission yeast).